The following is a 492-amino-acid chain: uncharacterized protein (492 aa).

An N-terminal signal peptide occupies residues 1–22 (MIRPNMFALLMLVVLAITSVNA). N-linked (GlcNAc...) asparagine; by host glycosylation is found at Asn-92, Asn-97, Asn-119, Asn-146, Asn-213, Asn-267, and Asn-458.

Its subcellular location is the secreted. This is an uncharacterized protein from Acanthamoeba polyphaga (Amoeba).